The chain runs to 480 residues: Acetylxylan esterase (480 aa).

The N-terminal stretch at M1–A19 is a signal peptide.

Belongs to the AB hydrolase superfamily.

The catalysed reaction is Deacetylation of xylans and xylo-oligosaccharides.. It participates in glycan degradation; xylan degradation. Functionally, involved in degradation of plant cell wall polysaccharides. Is an acetyl esterase with broad substrate specificity, releasing acetic acid from acetylated xylo-oligosaccharides and acetylated xylan as well as xylose-tetraacetate, 4-O-methylumbelliferyl acetate, glucose-pentaacetate, and cephalosporin C. Appears to have greater activity on oligosaccharides than on polymeric substrates. Is also able to release acetic acid from xylo-oligosaccharides with 4-O-methylglucuronic acid side groups proximally located to O-acetyl esters. Preferentially targets xylo-oligosaccharides possessing three or more O-acetyl groups, but following their depletion it is active on the less acetylated portion of the substrate. This is Acetylxylan esterase from Xylanibacter ruminicola (strain ATCC 19189 / DSM 19721 / CIP 105475 / JCM 8958 / 23) (Prevotella ruminicola).